The following is a 100-amino-acid chain: Small ribosomal subunit protein uS14c (100 aa).

Positions 1–31 (MARKSLIQREKKRQKLEQKYHSIRRSSKKEI) are disordered.

This sequence belongs to the universal ribosomal protein uS14 family. In terms of assembly, part of the 30S ribosomal subunit.

The protein localises to the plastid. The protein resides in the chloroplast. Its function is as follows. Binds 16S rRNA, required for the assembly of 30S particles. The chain is Small ribosomal subunit protein uS14c from Nicotiana tomentosiformis (Tobacco).